A 1049-amino-acid polypeptide reads, in one-letter code: RIMS-binding protein 2 (1049 aa).

Residues 164–231 (GKVHLCVARY…PSNFVDFIQD (68 aa)) form the SH3 1 domain. Fibronectin type-III domains lie at 294–387 (VPYP…GKDV), 390–471 (APSQ…EKDE), and 486–587 (PPQD…VPPA). Disordered stretches follow at residues 580–664 (PDLL…VSTT), 694–714 (SAGP…EVKR), and 728–750 (LGQQ…GSDL). The span at 582-598 (LLVPPAPHPRTAPPPKP) shows a compositional bias: pro residues. Basic and acidic residues predominate over residues 603–616 (MDTKDLGPHVKVDE). A compositionally biased stretch (low complexity) spans 641-651 (GPGRRSPSPSR). Serine 701 and serine 709 each carry phosphoserine. Over residues 735 to 746 (CHGDEYHTESSR) the composition is skewed to basic and acidic residues. Phosphoserine occurs at positions 832 and 839. Threonine 841 is subject to Phosphothreonine. SH3 domains lie at 848 to 916 (LPAR…EIHA) and 952 to 1019 (VPTR…EVPD). Positions 1024–1049 (HLSDAPPHYSHDPPMRTKAKRVSQPP) are disordered. The segment covering 1040 to 1049 (TKAKRVSQPP) has biased composition (basic residues).

This sequence belongs to the RIMBP family. As to quaternary structure, interacts with CACNA1D and CACNA1B, and potentially with other Ca(2+) channel alpha-1 isoforms. Interacts with RIMS1 and RIMS2.

Its subcellular location is the cell membrane. The protein localises to the synapse. Functionally, plays a role in the synaptic transmission as bifunctional linker that interacts simultaneously with RIMS1, RIMS2, CACNA1D and CACNA1B. The protein is RIMS-binding protein 2 (Rimbp2) of Rattus norvegicus (Rat).